A 125-amino-acid chain; its full sequence is Large ribosomal subunit protein bL12 (125 aa).

It belongs to the bacterial ribosomal protein bL12 family. Homodimer. Part of the ribosomal stalk of the 50S ribosomal subunit. Forms a multimeric L10(L12)X complex, where L10 forms an elongated spine to which 2 to 4 L12 dimers bind in a sequential fashion. Binds GTP-bound translation factors.

Its function is as follows. Forms part of the ribosomal stalk which helps the ribosome interact with GTP-bound translation factors. Is thus essential for accurate translation. The polypeptide is Large ribosomal subunit protein bL12 (Campylobacter jejuni (strain RM1221)).